Reading from the N-terminus, the 195-residue chain is Peptidyl-tRNA hydrolase (195 aa).

Tyr-17 is a tRNA binding site. Catalysis depends on His-22, which acts as the Proton acceptor. Phe-68, Asn-70, and Asn-116 together coordinate tRNA.

Belongs to the PTH family. In terms of assembly, monomer.

The protein resides in the cytoplasm. It carries out the reaction an N-acyl-L-alpha-aminoacyl-tRNA + H2O = an N-acyl-L-amino acid + a tRNA + H(+). Its function is as follows. Hydrolyzes ribosome-free peptidyl-tRNAs (with 1 or more amino acids incorporated), which drop off the ribosome during protein synthesis, or as a result of ribosome stalling. In terms of biological role, catalyzes the release of premature peptidyl moieties from peptidyl-tRNA molecules trapped in stalled 50S ribosomal subunits, and thus maintains levels of free tRNAs and 50S ribosomes. This is Peptidyl-tRNA hydrolase from Pectobacterium carotovorum subsp. carotovorum (strain PC1).